Consider the following 317-residue polypeptide: Beta-ketoacyl-[acyl-carrier-protein] synthase III (317 aa).

Active-site residues include Cys112 and His244. The tract at residues 245 to 249 (QANVR) is ACP-binding. The active site involves Asn274.

This sequence belongs to the thiolase-like superfamily. FabH family. As to quaternary structure, homodimer.

The protein resides in the cytoplasm. The enzyme catalyses malonyl-[ACP] + acetyl-CoA + H(+) = 3-oxobutanoyl-[ACP] + CO2 + CoA. It functions in the pathway lipid metabolism; fatty acid biosynthesis. Catalyzes the condensation reaction of fatty acid synthesis by the addition to an acyl acceptor of two carbons from malonyl-ACP. Catalyzes the first condensation reaction which initiates fatty acid synthesis and may therefore play a role in governing the total rate of fatty acid production. Possesses both acetoacetyl-ACP synthase and acetyl transacylase activities. Its substrate specificity determines the biosynthesis of branched-chain and/or straight-chain of fatty acids. The sequence is that of Beta-ketoacyl-[acyl-carrier-protein] synthase III from Rickettsia canadensis (strain McKiel).